Here is a 577-residue protein sequence, read N- to C-terminus: MNIQSILSDKIKQAMVIAGADQSCDALVRQSGKPQFGDYQANGIMAAAKKLGLNPREFAQKVLDNLQLSDIAEKLEIAGPGFINIFLNPTWLTTEISAALSHKNLGIQATNKQTVVIDYSSPNVAKEMHVGHLRSTIIGDAVARTLEFLGHNVIRANHVGDWGTQFGMLIAYLEKMQNEHASEMELQDLEAFYREAKKHYDEDEIFAEKARNYVVKLQSGDEYCRTMWKRLVDITMQQNQHNYNRLNVTLTEKDVMGESLYNPMLPSIVEDLKKQGLAVENDGALVVYLDEFKNKDGDPMGVIVQKKDGGFLYTTTDIAAAKYRYETLKANRALVFSDTRQSQHMQQAWLITRKAGYVPDSFSLEHKNFGMMLGKDGKPFKTRTGGTVKLADLLNEAIERATVLINEKNTNLSNDEKQAVIEAIGIGSVKYADLSKNRTTDYVFDWDNMLSFEGNTAPYMQYAYTRIRSIFNKTDINSTALLAAPLTIKDDKERTLAIKLLQFEEAVQTVGKEGTPHVLCAYLYELAGIFSSFYEHCPILNAENESIKLSRLKLALLTEKTLKQGLTLLGIKTVEKM.

A 'HIGH' region motif is present at residues 122 to 132 (PNVAKEMHVGH).

The protein belongs to the class-I aminoacyl-tRNA synthetase family. As to quaternary structure, monomer.

It localises to the cytoplasm. It carries out the reaction tRNA(Arg) + L-arginine + ATP = L-arginyl-tRNA(Arg) + AMP + diphosphate. The sequence is that of Arginine--tRNA ligase from Haemophilus influenzae (strain 86-028NP).